A 185-amino-acid polypeptide reads, in one-letter code: Alkyl hydroperoxide reductase AhpD (185 aa).

The active-site Proton donor is the Cys-132. A disulfide bridge connects residues Cys-132 and Cys-135. Catalysis depends on Cys-135, which acts as the Cysteine sulfenic acid (-SOH) intermediate.

Belongs to the AhpD family.

It carries out the reaction N(6)-[(R)-dihydrolipoyl]-L-lysyl-[lipoyl-carrier protein] + a hydroperoxide = N(6)-[(R)-lipoyl]-L-lysyl-[lipoyl-carrier protein] + an alcohol + H2O. Functionally, antioxidant protein with alkyl hydroperoxidase activity. Required for the reduction of the AhpC active site cysteine residues and for the regeneration of the AhpC enzyme activity. The polypeptide is Alkyl hydroperoxide reductase AhpD (Anaeromyxobacter sp. (strain Fw109-5)).